Reading from the N-terminus, the 59-residue chain is Large ribosomal subunit protein uL30 (59 aa).

This sequence belongs to the universal ribosomal protein uL30 family. Part of the 50S ribosomal subunit.

This Clostridium beijerinckii (strain ATCC 51743 / NCIMB 8052) (Clostridium acetobutylicum) protein is Large ribosomal subunit protein uL30.